A 332-amino-acid chain; its full sequence is tRNA N6-adenosine threonylcarbamoyltransferase (332 aa).

The Fe cation site is built by H108 and H112. Substrate contacts are provided by residues 129–133 (LISGG), D161, E178, and S258. D286 lines the Fe cation pocket.

Belongs to the KAE1 / TsaD family. Fe(2+) is required as a cofactor.

It is found in the cytoplasm. It carries out the reaction L-threonylcarbamoyladenylate + adenosine(37) in tRNA = N(6)-L-threonylcarbamoyladenosine(37) in tRNA + AMP + H(+). In terms of biological role, required for the formation of a threonylcarbamoyl group on adenosine at position 37 (t(6)A37) in tRNAs that read codons beginning with adenine. Is probably involved in the transfer of the threonylcarbamoyl moiety of threonylcarbamoyl-AMP (TC-AMP) to the N6 group of A37. The polypeptide is tRNA N6-adenosine threonylcarbamoyltransferase (Pyrobaculum arsenaticum (strain DSM 13514 / JCM 11321 / PZ6)).